The primary structure comprises 431 residues: Enolase (431 aa).

Residue Gln-163 participates in (2R)-2-phosphoglycerate binding. Residue Glu-205 is the Proton donor of the active site. Mg(2+) is bound by residues Asp-242, Glu-288, and Asp-315. (2R)-2-phosphoglycerate-binding residues include Lys-340, Arg-369, Ser-370, and Lys-391. Lys-340 serves as the catalytic Proton acceptor.

This sequence belongs to the enolase family. Mg(2+) is required as a cofactor.

The protein localises to the cytoplasm. It is found in the secreted. The protein resides in the cell surface. The catalysed reaction is (2R)-2-phosphoglycerate = phosphoenolpyruvate + H2O. The protein operates within carbohydrate degradation; glycolysis; pyruvate from D-glyceraldehyde 3-phosphate: step 4/5. Its function is as follows. Catalyzes the reversible conversion of 2-phosphoglycerate (2-PG) into phosphoenolpyruvate (PEP). It is essential for the degradation of carbohydrates via glycolysis. The protein is Enolase of Bacillus anthracis (strain A0248).